The following is a 376-amino-acid chain: tRNA-specific 2-thiouridylase MnmA (376 aa).

Residues 14–21 (GMSGGVDS) and Met40 contribute to the ATP site. The segment at 100 to 102 (NPD) is interaction with target base in tRNA. Cys105 functions as the Nucleophile in the catalytic mechanism. Cys105 and Cys202 are oxidised to a cystine. ATP is bound at residue Gly129. The tract at residues 152–154 (KDQ) is interaction with tRNA. Cys202 serves as the catalytic Cysteine persulfide intermediate. The tract at residues 315-316 (RY) is interaction with tRNA.

Belongs to the MnmA/TRMU family.

The protein resides in the cytoplasm. The catalysed reaction is S-sulfanyl-L-cysteinyl-[protein] + uridine(34) in tRNA + AH2 + ATP = 2-thiouridine(34) in tRNA + L-cysteinyl-[protein] + A + AMP + diphosphate + H(+). Its function is as follows. Catalyzes the 2-thiolation of uridine at the wobble position (U34) of tRNA, leading to the formation of s(2)U34. The protein is tRNA-specific 2-thiouridylase MnmA of Lactococcus lactis subsp. lactis (strain IL1403) (Streptococcus lactis).